The following is a 201-amino-acid chain: Holliday junction branch migration complex subunit RuvA (201 aa).

The tract at residues 1 to 65 is domain I; sequence MIAYIEGRVA…EDALELYGFS (65 aa). A domain II region spans residues 66–143; that stretch reads GWDERQTFLV…KVESLPASAG (78 aa). Positions 143–147 are flexible linker; that stretch reads GLAAG. Residues 148-201 form a domain III region; it reads VPGSVLRDAVQALGNLGYAEEEAAPVLKNILKQDPDLDVSEALRAALKALAKAR.

This sequence belongs to the RuvA family. In terms of assembly, homotetramer. Forms an RuvA(8)-RuvB(12)-Holliday junction (HJ) complex. HJ DNA is sandwiched between 2 RuvA tetramers; dsDNA enters through RuvA and exits via RuvB. An RuvB hexamer assembles on each DNA strand where it exits the tetramer. Each RuvB hexamer is contacted by two RuvA subunits (via domain III) on 2 adjacent RuvB subunits; this complex drives branch migration. In the full resolvosome a probable DNA-RuvA(4)-RuvB(12)-RuvC(2) complex forms which resolves the HJ.

Its subcellular location is the cytoplasm. Functionally, the RuvA-RuvB-RuvC complex processes Holliday junction (HJ) DNA during genetic recombination and DNA repair, while the RuvA-RuvB complex plays an important role in the rescue of blocked DNA replication forks via replication fork reversal (RFR). RuvA specifically binds to HJ cruciform DNA, conferring on it an open structure. The RuvB hexamer acts as an ATP-dependent pump, pulling dsDNA into and through the RuvAB complex. HJ branch migration allows RuvC to scan DNA until it finds its consensus sequence, where it cleaves and resolves the cruciform DNA. In Oleidesulfovibrio alaskensis (strain ATCC BAA-1058 / DSM 17464 / G20) (Desulfovibrio alaskensis), this protein is Holliday junction branch migration complex subunit RuvA.